The primary structure comprises 21 residues: thr operon leader peptide (21 aa).

This sequence belongs to the thr operon leader peptide family.

In terms of biological role, this protein is involved in control of the biosynthesis of threonine. The chain is thr operon leader peptide from Salmonella choleraesuis (strain SC-B67).